A 270-amino-acid polypeptide reads, in one-letter code: Hydroxyethylthiazole kinase (270 aa).

Met-47 provides a ligand contact to substrate. Residues Arg-123 and Ser-170 each coordinate ATP. Gly-197 is a substrate binding site.

It belongs to the Thz kinase family. It depends on Mg(2+) as a cofactor.

It catalyses the reaction 5-(2-hydroxyethyl)-4-methylthiazole + ATP = 4-methyl-5-(2-phosphooxyethyl)-thiazole + ADP + H(+). It functions in the pathway cofactor biosynthesis; thiamine diphosphate biosynthesis; 4-methyl-5-(2-phosphoethyl)-thiazole from 5-(2-hydroxyethyl)-4-methylthiazole: step 1/1. Its function is as follows. Catalyzes the phosphorylation of the hydroxyl group of 4-methyl-5-beta-hydroxyethylthiazole (THZ). This is Hydroxyethylthiazole kinase from Syntrophus aciditrophicus (strain SB).